The primary structure comprises 787 residues: LPS-assembly protein LptD (787 aa).

Residues 1 to 39 form the signal peptide; the sequence is MPPKTLFPLVPACDAAPRKKRLAVALLAVPGLVPAVSQA.

This sequence belongs to the LptD family. As to quaternary structure, component of the lipopolysaccharide transport and assembly complex. Interacts with LptE and LptA.

The protein resides in the cell outer membrane. Functionally, together with LptE, is involved in the assembly of lipopolysaccharide (LPS) at the surface of the outer membrane. This chain is LPS-assembly protein LptD, found in Burkholderia pseudomallei (strain 1710b).